Here is a 493-residue protein sequence, read N- to C-terminus: UDP-N-acetylmuramate--L-alanine ligase (493 aa).

Residue 126-132 (GTHGKTT) participates in ATP binding.

Belongs to the MurCDEF family.

It is found in the cytoplasm. The catalysed reaction is UDP-N-acetyl-alpha-D-muramate + L-alanine + ATP = UDP-N-acetyl-alpha-D-muramoyl-L-alanine + ADP + phosphate + H(+). Its pathway is cell wall biogenesis; peptidoglycan biosynthesis. Cell wall formation. This chain is UDP-N-acetylmuramate--L-alanine ligase, found in Hamiltonella defensa subsp. Acyrthosiphon pisum (strain 5AT).